Reading from the N-terminus, the 691-residue chain is Elongation factor G (691 aa).

The region spanning N8–V282 is the tr-type G domain. GTP-binding positions include A17–T24, D81–H85, and N135–D138.

It belongs to the TRAFAC class translation factor GTPase superfamily. Classic translation factor GTPase family. EF-G/EF-2 subfamily.

It localises to the cytoplasm. Functionally, catalyzes the GTP-dependent ribosomal translocation step during translation elongation. During this step, the ribosome changes from the pre-translocational (PRE) to the post-translocational (POST) state as the newly formed A-site-bound peptidyl-tRNA and P-site-bound deacylated tRNA move to the P and E sites, respectively. Catalyzes the coordinated movement of the two tRNA molecules, the mRNA and conformational changes in the ribosome. This Heliobacterium modesticaldum (strain ATCC 51547 / Ice1) protein is Elongation factor G.